Here is a 496-residue protein sequence, read N- to C-terminus: MLQTKDYEFWFVTGSQHLYGEETLELVDQHAKSICEGLSGISSRYKITHKPVVTSPETIRELLREAEYSETCAGIITWMHTFSPAKMWIEGLSSYQKPLMHLHTQYNRDIPWGTIDMDFMNSNQSAHGDREYGYINSRMGLSRKVIAGYWDDEEVKKEMSQWMDTAAALNESRHIKVARFGDNMRHVAVTDGDKVGAHIQFGWQVDGYGIGDLVEVMDRITDDEVDTLYAEYDRLYVISEETKRDEAKVASIKEQAKIELGLTAFLEQGGYTAFTTSFEVLHGMKQLPGLAVQRLMEKGYGFAGEGDWKTAALVRMMKIMAKGKRTSFMEDYTYHFEPGNEMILGSHMLEVCPTVALDQPKIEVHSLSIGGKEDPARLVFNGISGSAIQASIVDIGGRFRLVLNEVNGQEIEKDMPNLPVARVLWKPEPSLKTAAEAWILAGGAHHTCLSYELTAEQMLDWAEMAGIESVLISRDTTIHKLKHELKWNEALYRLQK.

Mn(2+) contacts are provided by Glu-305, Glu-330, His-347, and His-446.

The protein belongs to the arabinose isomerase family. Requires Mn(2+) as cofactor.

The enzyme catalyses beta-L-arabinopyranose = L-ribulose. The protein operates within carbohydrate degradation; L-arabinose degradation via L-ribulose; D-xylulose 5-phosphate from L-arabinose (bacterial route): step 1/3. Catalyzes the conversion of L-arabinose to L-ribulose. The protein is L-arabinose isomerase of Bacillus subtilis (strain 168).